A 1279-amino-acid polypeptide reads, in one-letter code: MSGTKWTDEQRQAIFTKNCNLLVAAGAGAGKTAVLVQRIIEKILDKEEPIDIDKLLVVTFTNAAAAEMRERIGDAISKGLDEDPESKVLRKQLTLLNKSNIMTIHSFCLQVIKNNFHTMEIDPNFRICDETEGILMKQEAIDELFDELYEIENEDFINLVESYASRKDTRLQEVVLELHRFAKSAPFPYTWLLNMAEGFNVGENFNFEETLWADMIMEDMKVLLYGFKNMLQQSIDVILNSEGIDYYYEPFKMDLSFINSLLEKSSFKEFRGEIIAYDFPKLPLKRNKDADKEAKERVKKLRDKVKKKIVELKNILDSYENEFIKKEFIFLYPSMKALSNLVILFDKKYEAKKRERDLIDFNDIEHLCLSILTDKNSDGHIIPSDIALNYRKKFAEVLIDEYQDSNLVQEVIMSMVSRVKGYWSFYNGQLIFNEKEINLEEPQIGLDIPNRFMVGDVKQSIYRFRQAKPEIFLDKYNEYNEEEDRKNRKVKLFKNFRSREEVINGVNYLFKQIMSKTIGELDYTEEEALKVGASYGEEVKGEPIELCLMDKKYEISEEVLKEYNVDEEEALDNIQLEGRLVAKKIQKLVGNNLEGGLKVFDKKLGEYRNLQYRDIVILMRATSNWAPVFVEELAKEGIPVFADTNSGYFDTAEIKTMISLLQIIDNPLQDIPLLSVLRSPIASFTDDELIDIRMVNKNITFYECMEIIYRLYKNEKLDSYYSFYIEDENKINKIIKDMNEKLKNKICSFIEKLKLWREKSIHIDIDEFIWFLYVETGYYGYAGALQAGEQRQANLRILFQRAKQYAKTSYKGLFNFINFINKLKFSSGDMGSAKILGENENVVRIMSIHKSKGLEFPVVILSGTGKNFNMTDLNKNILFHRDLGYGPDYVDTERRIAYPSLVKNIIKNKIRLETLSEEMRILYVALTRAREKLIITGLINNMDKTVEDWLNLSEDKNKVPEYAVMSGKTYLDWIGPALIKHKDAVSFREELKMTSELSNIVDDKSKWKIELWNKRELLKEKVEEDEVEISEKIKETLMSLEESNYKEEIYKRLSFKYKYDNASSIPTKLSVSDVKKQFILDEKENTEELFKKLELRKPMFMEEKKKISPSERGTIIHLFMQHLDLKKAENEEDIKEQINRLIEREFITYEQSKVISPYKILKFCRGELGKRILNSNNVNKEMPFSIEIPALEIYKELDKEIYKNEKLIIQGVIDCYFEEEDGLVLLDYKTDYVNDIEEIKNRYEIQIKYYEEALNRITGKNVKDKYLYLFSVDNYIKID.

The UvrD-like helicase ATP-binding domain maps to 4–499; that stretch reads TKWTDEQRQA…VKLFKNFRSR (496 aa). Position 25–32 (25–32) interacts with ATP; sequence AGAGAGKT. The 328-residue stretch at 526–853 folds into the UvrD-like helicase C-terminal domain; sequence EEALKVGASY…RIMSIHKSKG (328 aa).

The protein belongs to the helicase family. AddA subfamily. In terms of assembly, heterodimer of AddA and AddB/RexB. Mg(2+) is required as a cofactor.

It carries out the reaction Couples ATP hydrolysis with the unwinding of duplex DNA by translocating in the 3'-5' direction.. The catalysed reaction is ATP + H2O = ADP + phosphate + H(+). Functionally, the heterodimer acts as both an ATP-dependent DNA helicase and an ATP-dependent, dual-direction single-stranded exonuclease. Recognizes the chi site generating a DNA molecule suitable for the initiation of homologous recombination. The AddA nuclease domain is required for chi fragment generation; this subunit has the helicase and 3' -&gt; 5' nuclease activities. This Clostridium botulinum (strain Okra / Type B1) protein is ATP-dependent helicase/nuclease subunit A.